We begin with the raw amino-acid sequence, 994 residues long: Translation initiation factor IF-2 (994 aa).

2 stretches are compositionally biased toward polar residues: residues 1-10 and 28-40; these read MSDENNNGRN and SVSS…SFSH. Residues 1–405 are disordered; that stretch reads MSDENNNGRN…REKRKGGAQE (405 aa). Over residues 76–91 the composition is skewed to low complexity; that stretch reads PQKPAGPAQAPRAPQG. Basic and acidic residues predominate over residues 98–131; the sequence is AEERAARQRAIELARQQEADRRAREERARAEAEA. Low complexity predominate over residues 132–146; it reads ARAAQQKAAQAAAEP. The segment covering 147 to 157 has biased composition (pro residues); the sequence is PAAPPPAPAAP. Residues 158 to 172 are compositionally biased toward low complexity; sequence PAAAAPAAPAAEAAP. Positions 173-188 are enriched in pro residues; that stretch reads APKPAPSPRPVPPSAP. Low complexity predominate over residues 189 to 204; that stretch reads APQAARPAAEAPPRQA. Basic and acidic residues-rich tracts occupy residues 216 to 235 and 247 to 273; these read PDRR…RPSN and PRRD…DRPQ. Gly residues predominate over residues 298 to 310; it reads RGPGGPRGPGGPR. 2 stretches are compositionally biased toward basic and acidic residues: residues 336-350 and 390-402; these read VDRR…RDPG and RARE…RKGG. Residues 492–662 form the tr-type G domain; it reads PRPPVVAVMG…LLQAEVLDLK (171 aa). Residues 501–508 are G1; it reads GHVDHGKT. 501–508 serves as a coordination point for GTP; that stretch reads GHVDHGKT. Residues 526-530 are G2; it reads GITQH. The tract at residues 548–551 is G3; the sequence is DTPG. GTP contacts are provided by residues 548–552 and 602–605; these read DTPGH and NKID. The tract at residues 602-605 is G4; sequence NKID. The G5 stretch occupies residues 638–640; sequence SAT.

Belongs to the TRAFAC class translation factor GTPase superfamily. Classic translation factor GTPase family. IF-2 subfamily.

It localises to the cytoplasm. Functionally, one of the essential components for the initiation of protein synthesis. Protects formylmethionyl-tRNA from spontaneous hydrolysis and promotes its binding to the 30S ribosomal subunits. Also involved in the hydrolysis of GTP during the formation of the 70S ribosomal complex. The protein is Translation initiation factor IF-2 of Phenylobacterium zucineum (strain HLK1).